A 567-amino-acid chain; its full sequence is Urease subunit alpha (567 aa).

Residues 129–567 (GGIDTHIHWI…LPMAQRYFLF (439 aa)) enclose the Urease domain. The Ni(2+) site is built by H134, H136, and K217. An N6-carboxylysine modification is found at K217. Substrate is bound at residue H219. Positions 246 and 272 each coordinate Ni(2+). The active-site Proton donor is the H320. D360 contributes to the Ni(2+) binding site.

Belongs to the metallo-dependent hydrolases superfamily. Urease alpha subunit family. As to quaternary structure, heterotrimer of UreA (gamma), UreB (beta) and UreC (alpha) subunits. Three heterotrimers associate to form the active enzyme. Ni cation serves as cofactor. In terms of processing, carboxylation allows a single lysine to coordinate two nickel ions.

Its subcellular location is the cytoplasm. The catalysed reaction is urea + 2 H2O + H(+) = hydrogencarbonate + 2 NH4(+). Its pathway is nitrogen metabolism; urea degradation; CO(2) and NH(3) from urea (urease route): step 1/1. This is Urease subunit alpha from Enterobacter sp. (strain 638).